The primary structure comprises 247 residues: ATP synthase subunit a, chloroplastic (247 aa).

5 helical membrane-spanning segments follow: residues 38–58 (QVLITSWVVIAILLGSATLAV), 95–115 (VPFIGTMFLFIFVSNWSGALL), 134–154 (INTTVALALLTSVAYFYAGLT), 199–219 (LVVVVLVSLVPSVVPIPVMFL), and 220–240 (GLFTSGIQALIFATLAAAYIG).

It belongs to the ATPase A chain family. F-type ATPases have 2 components, CF(1) - the catalytic core - and CF(0) - the membrane proton channel. CF(1) has five subunits: alpha(3), beta(3), gamma(1), delta(1), epsilon(1). CF(0) has four main subunits: a, b, b' and c.

It is found in the plastid. It localises to the chloroplast thylakoid membrane. Its function is as follows. Key component of the proton channel; it plays a direct role in the translocation of protons across the membrane. In Guizotia abyssinica (Niger), this protein is ATP synthase subunit a, chloroplastic.